A 42-amino-acid polypeptide reads, in one-letter code: Photosystem I reaction center subunit IX (42 aa).

The helical transmembrane segment at 7–27 (FLSLGPVLLVLWLSVQATLLI) threads the bilayer.

Belongs to the PsaJ family.

The protein localises to the cellular thylakoid membrane. Functionally, may help in the organization of the PsaE and PsaF subunits. The polypeptide is Photosystem I reaction center subunit IX (Gloeothece citriformis (strain PCC 7424) (Cyanothece sp. (strain PCC 7424))).